A 305-amino-acid chain; its full sequence is tRNA-cytidine(32) 2-sulfurtransferase (305 aa).

Residues 1–20 (MTAVLPLPHPLADPAPRDPR) are disordered. The PP-loop motif signature appears at 59-64 (SGGKDS). Residues C134, C137, and C225 each coordinate [4Fe-4S] cluster. The span at 282–293 (DAPPDLAPDPGA) shows a compositional bias: low complexity. A disordered region spans residues 282–305 (DAPPDLAPDPGAWLTASDATHDSD).

This sequence belongs to the TtcA family. As to quaternary structure, homodimer. The cofactor is Mg(2+). [4Fe-4S] cluster serves as cofactor.

The protein localises to the cytoplasm. It carries out the reaction cytidine(32) in tRNA + S-sulfanyl-L-cysteinyl-[cysteine desulfurase] + AH2 + ATP = 2-thiocytidine(32) in tRNA + L-cysteinyl-[cysteine desulfurase] + A + AMP + diphosphate + H(+). It functions in the pathway tRNA modification. In terms of biological role, catalyzes the ATP-dependent 2-thiolation of cytidine in position 32 of tRNA, to form 2-thiocytidine (s(2)C32). The sulfur atoms are provided by the cysteine/cysteine desulfurase (IscS) system. The polypeptide is tRNA-cytidine(32) 2-sulfurtransferase (Xanthomonas oryzae pv. oryzae (strain PXO99A)).